The primary structure comprises 102 residues: Small ribosomal subunit protein uS10 (102 aa).

The protein belongs to the universal ribosomal protein uS10 family. Part of the 30S ribosomal subunit.

In terms of biological role, involved in the binding of tRNA to the ribosomes. The protein is Small ribosomal subunit protein uS10 of Rhodospirillum centenum (strain ATCC 51521 / SW).